The sequence spans 442 residues: Probable D-serine dehydratase (442 aa).

Lys-111 bears the N6-(pyridoxal phosphate)lysine mark.

It belongs to the serine/threonine dehydratase family. DsdA subfamily. Pyridoxal 5'-phosphate serves as cofactor.

It catalyses the reaction D-serine = pyruvate + NH4(+). This chain is Probable D-serine dehydratase, found in Sinorhizobium medicae (strain WSM419) (Ensifer medicae).